Here is a 1214-residue protein sequence, read N- to C-terminus: Protein argonaute-2 (1214 aa).

Positions 1–412 are disordered; that stretch reads MGKKDKNKKG…GSIKRGTIGK (412 aa). Low complexity-rich tracts occupy residues 18–93 and 107–117; these read PQPQ…QQKS and KQQVQGWTKQG. 7 stretches are compositionally biased toward gly residues: residues 118–131, 141–154, 164–177, 187–200, 210–223, 233–246, and 256–269; these read QQGG…GQDG and QQGG…GQEG. The span at 270 to 282 shows a compositional bias: low complexity; the sequence is GYQQRPPGQQQGG. Gly residues-rich tracts occupy residues 302–315, 325–338, and 348–361; these read QQGG…GQEG. Over residues 362–394 the composition is skewed to low complexity; that stretch reads GYQQRPPGQQPNQTQSQGQYQSRGPPQQQQAAP. The 110-residue stretch at 608-717 folds into the PAZ domain; that stretch reads LERFSLKAKI…LPIELCSIEE (110 aa). The interaction with guide RNA stretch occupies residues 681-686; the sequence is YFHSRN. The Piwi domain maps to 885–1186; that stretch reads LAIVIIPQFR…ARGRVYLTGT (302 aa). A divalent metal cation-binding residues include D965 and D1037. Interaction with guide RNA regions lie at residues 1075–1076, 1119–1127, and 1156–1178; these read KR, HQAIQGTAK, and FPRC…VAAR. An a divalent metal cation-binding site is contributed by H1173.

Belongs to the argonaute family. Ago subfamily. In terms of assembly, interacts with Fmr1, Dcr-1 and vig to form the RNA-induced silencing complex (RISC), a ribonucleoprotein (RNP) complex involved in translation regulation, other components of the complex are RpL5, RpL11 and Rm62. As part of the RISC complex, interacts with Tudor-SN. Interacts with Taf11. As to quaternary structure, (Microbial infection) Interacts with cricket paralysis virus protein 1A; this interaction may block the RISC activity. Requires Mg(2+) as cofactor. It depends on Mn(2+) as a cofactor.

The protein resides in the nucleus. Its subcellular location is the cytoplasm. It is found in the cytoplasmic ribonucleoprotein granule. In terms of biological role, essential for RNA interference (RNAi); double-stranded RNA induces potent and specific gene silencing. RNAi is mediated by the RNA-induced silencing complex (RISC), a sequence-specific, multicomponent nuclease that destroys or silences messenger RNAs homologous to the silencing trigger. The sequence is that of Protein argonaute-2 from Drosophila melanogaster (Fruit fly).